A 302-amino-acid chain; its full sequence is Bifunctional phosphoglucose/phosphomannose isomerase (302 aa).

Residues 27-160 (VEGEVVRIEA…KVYGIDVKIP (134 aa)) form the SIS domain. Residues G47, S48, S87, S89, T92, and R135 each contribute to the D-fructose 6-phosphate site. Residues G47, S48, S87, S89, T92, and R135 each coordinate D-glucose 6-phosphate. E203 serves as the catalytic Proton acceptor. 2 residues coordinate D-fructose 6-phosphate: H219 and K298. Residues H219 and K298 each contribute to the D-glucose 6-phosphate site. The Proton donor role is filled by H219. Catalysis depends on K298, which acts as the Proton acceptor.

It belongs to the PGI/PMI family. Homodimer.

It localises to the cytoplasm. It carries out the reaction alpha-D-glucose 6-phosphate = beta-D-fructose 6-phosphate. It catalyses the reaction D-mannose 6-phosphate = D-fructose 6-phosphate. With respect to regulation, inhibited by 5-phosphoarabinonate (PAB) and 6-phosphogluconate. Dual specificity isomerase that catalyzes the isomerization of both glucose-6-phosphate and mannose-6-phosphate to fructose-6-phosphate with similar catalytic efficiency. The polypeptide is Bifunctional phosphoglucose/phosphomannose isomerase (Pyrobaculum aerophilum (strain ATCC 51768 / DSM 7523 / JCM 9630 / CIP 104966 / NBRC 100827 / IM2)).